A 324-amino-acid polypeptide reads, in one-letter code: Glutathione synthetase (324 aa).

Residues 125–312 enclose the ATP-grasp domain; it reads EKLFTTTHFP…ISTIILDNLE (188 aa). 152-209 contributes to the ATP binding site; sequence FIKTYKDIIIKPLHGMAGLSIFRIKEHDPNTSVIIETMTKYETIPCISQNYITDIQKG. Glu283 and Asn285 together coordinate Mg(2+).

Belongs to the prokaryotic GSH synthase family. Requires Mg(2+) as cofactor. Mn(2+) is required as a cofactor.

The enzyme catalyses gamma-L-glutamyl-L-cysteine + glycine + ATP = glutathione + ADP + phosphate + H(+). It functions in the pathway sulfur metabolism; glutathione biosynthesis; glutathione from L-cysteine and L-glutamate: step 2/2. The protein is Glutathione synthetase of Buchnera aphidicola subsp. Baizongia pistaciae (strain Bp).